Consider the following 271-residue polypeptide: Formamidopyrimidine-DNA glycosylase (271 aa).

Proline 2 functions as the Schiff-base intermediate with DNA in the catalytic mechanism. Catalysis depends on glutamate 3, which acts as the Proton donor. Lysine 58 serves as the catalytic Proton donor; for beta-elimination activity. Residues histidine 91, arginine 110, and arginine 152 each contribute to the DNA site. The segment at 237–271 (LVYGREGQPCVHCGRPIRCETIGQRSSYFCTRCQR) adopts an FPG-type zinc-finger fold. Arginine 261 acts as the Proton donor; for delta-elimination activity in catalysis.

It belongs to the FPG family. Monomer. It depends on Zn(2+) as a cofactor.

The enzyme catalyses Hydrolysis of DNA containing ring-opened 7-methylguanine residues, releasing 2,6-diamino-4-hydroxy-5-(N-methyl)formamidopyrimidine.. The catalysed reaction is 2'-deoxyribonucleotide-(2'-deoxyribose 5'-phosphate)-2'-deoxyribonucleotide-DNA = a 3'-end 2'-deoxyribonucleotide-(2,3-dehydro-2,3-deoxyribose 5'-phosphate)-DNA + a 5'-end 5'-phospho-2'-deoxyribonucleoside-DNA + H(+). Its function is as follows. Involved in base excision repair of DNA damaged by oxidation or by mutagenic agents. Acts as a DNA glycosylase that recognizes and removes damaged bases. Has a preference for oxidized purines, such as 7,8-dihydro-8-oxoguanine (8-oxoG). Has AP (apurinic/apyrimidinic) lyase activity and introduces nicks in the DNA strand. Cleaves the DNA backbone by beta-delta elimination to generate a single-strand break at the site of the removed base with both 3'- and 5'-phosphates. The sequence is that of Formamidopyrimidine-DNA glycosylase from Syntrophotalea carbinolica (strain DSM 2380 / NBRC 103641 / GraBd1) (Pelobacter carbinolicus).